A 329-amino-acid chain; its full sequence is GTP 3',8-cyclase (329 aa).

A Radical SAM core domain is found at 1–229; the sequence is MNPVDYLRIS…ESTIKGNGPA (229 aa). Residue Arg-8 coordinates GTP. The [4Fe-4S] cluster site is built by Cys-15 and Cys-19. Residue Tyr-21 coordinates S-adenosyl-L-methionine. Cys-22 is a binding site for [4Fe-4S] cluster. A GTP-binding site is contributed by Arg-60. Gly-64 contacts S-adenosyl-L-methionine. Thr-91 lines the GTP pocket. Ser-115 provides a ligand contact to S-adenosyl-L-methionine. Position 155 (Lys-155) interacts with GTP. S-adenosyl-L-methionine is bound at residue Met-189. [4Fe-4S] cluster is bound by residues Cys-252 and Cys-255. GTP is bound at residue 257-259; it reads RMR. [4Fe-4S] cluster is bound at residue Cys-269.

The protein belongs to the radical SAM superfamily. MoaA family. Monomer and homodimer. [4Fe-4S] cluster is required as a cofactor.

The catalysed reaction is GTP + AH2 + S-adenosyl-L-methionine = (8S)-3',8-cyclo-7,8-dihydroguanosine 5'-triphosphate + 5'-deoxyadenosine + L-methionine + A + H(+). It functions in the pathway cofactor biosynthesis; molybdopterin biosynthesis. Catalyzes the cyclization of GTP to (8S)-3',8-cyclo-7,8-dihydroguanosine 5'-triphosphate. The sequence is that of GTP 3',8-cyclase from Rippkaea orientalis (strain PCC 8801 / RF-1) (Cyanothece sp. (strain PCC 8801)).